A 382-amino-acid polypeptide reads, in one-letter code: Deoxyhypusine synthase (382 aa).

Residues 108 to 112 (SNLIS), 134 to 136 (TAG), Glu140, and Asp257 contribute to the NAD(+) site. 139-140 (EE) provides a ligand contact to spermidine. Asp262 is a binding site for spermidine. Gly304 contacts NAD(+). His309 contributes to the spermidine binding site. 329–330 (TG) contributes to the NAD(+) binding site. Spermidine-binding positions include 335-337 (GSD) and 344-350 (EAVSWGK). Lys350 functions as the Nucleophile in the catalytic mechanism. Position 363 to 364 (363 to 364 (DV)) interacts with NAD(+).

It belongs to the deoxyhypusine synthase family. It depends on NAD(+) as a cofactor.

The catalysed reaction is [eIF5A protein]-L-lysine + spermidine = [eIF5A protein]-deoxyhypusine + propane-1,3-diamine. The protein operates within protein modification; eIF5A hypusination. Functionally, catalyzes the NAD-dependent oxidative cleavage of spermidine and the subsequent transfer of the butylamine moiety of spermidine to the epsilon-amino group of a specific lysine residue of the eIF-5A precursor protein to form the intermediate deoxyhypusine residue. This is Deoxyhypusine synthase (DYS1) from Eremothecium gossypii (strain ATCC 10895 / CBS 109.51 / FGSC 9923 / NRRL Y-1056) (Yeast).